We begin with the raw amino-acid sequence, 358 residues long: Glyoxylate/succinic semialdehyde reductase 2, chloroplastic (358 aa).

A chloroplast-targeting transit peptide spans 1 to 44 (MPLVSLSFASSSSKAMALCSICPRIPLRFRPKPISPFLSKPQIC). NADP(+) contacts are provided by residues 70-84 (GFLG…MAQN) and Thr-161. Residue Lys-236 is part of the active site. Residue Lys-304 participates in NADP(+) binding.

It belongs to the HIBADH-related family. NP60 subfamily.

The protein localises to the plastid. It localises to the chloroplast stroma. The enzyme catalyses glycolate + NADP(+) = glyoxylate + NADPH + H(+). The catalysed reaction is 4-hydroxybutanoate + NADP(+) = succinate semialdehyde + NADPH + H(+). Its activity is regulated as follows. The ratio of NADPH/NADP(+) may regulate enzymatic activity. In terms of biological role, catalyzes the NADPH-dependent reduction of glyoxylate to glycolate as well as succinic semialdehyde (SSA) to gamma-hydroxybutyrate in vitro. May function in redox homeostasis and play a role in oxidative stress tolerance by detoxifying glyoxylate and SSA generated in glycolate metabolism and GABA metabolism, respectively. This chain is Glyoxylate/succinic semialdehyde reductase 2, chloroplastic (GLYR2), found in Arabidopsis thaliana (Mouse-ear cress).